A 326-amino-acid polypeptide reads, in one-letter code: Diaminopimelate epimerase (326 aa).

Residues Asn-13 and Asn-72 each coordinate substrate. The active-site Proton donor is the Cys-81. Substrate contacts are provided by residues 82–83 (GN), Asn-169, Asn-205, and 223–224 (ER). Catalysis depends on Cys-232, which acts as the Proton acceptor. Residue 233–234 (GT) coordinates substrate.

The protein belongs to the diaminopimelate epimerase family. As to quaternary structure, homodimer.

The protein resides in the cytoplasm. The enzyme catalyses (2S,6S)-2,6-diaminopimelate = meso-2,6-diaminopimelate. It functions in the pathway amino-acid biosynthesis; L-lysine biosynthesis via DAP pathway; DL-2,6-diaminopimelate from LL-2,6-diaminopimelate: step 1/1. In terms of biological role, catalyzes the stereoinversion of LL-2,6-diaminopimelate (L,L-DAP) to meso-diaminopimelate (meso-DAP), a precursor of L-lysine and an essential component of the bacterial peptidoglycan. The protein is Diaminopimelate epimerase of Enterococcus faecalis (strain ATCC 700802 / V583).